Reading from the N-terminus, the 350-residue chain is 2-oxoglutarate and iron-dependent oxygenase domain-containing protein 2 (350 aa).

A Fe2OG dioxygenase domain is found at 215–309 (DSHRAFVVKY…RWNLVVWLRA (95 aa)). Residues His235, Asp237, and His290 each coordinate Fe cation. Residue Arg300 coordinates 2-oxoglutarate.

Belongs to the OGFOD2 family. It depends on Fe(2+) as a cofactor. Requires L-ascorbate as cofactor.

The polypeptide is 2-oxoglutarate and iron-dependent oxygenase domain-containing protein 2 (OGFOD2) (Homo sapiens (Human)).